The sequence spans 85 residues: RNA-binding protein Hfq (85 aa).

The 61-residue stretch at 10 to 70 (DIFLNGARKN…ISTINPAKPL (61 aa)) folds into the Sm domain.

It belongs to the Hfq family. In terms of assembly, homohexamer.

Functionally, RNA chaperone that binds small regulatory RNA (sRNAs) and mRNAs to facilitate mRNA translational regulation in response to envelope stress, environmental stress and changes in metabolite concentrations. Also binds with high specificity to tRNAs. The sequence is that of RNA-binding protein Hfq from Clostridium botulinum (strain 657 / Type Ba4).